A 520-amino-acid chain; its full sequence is Succinyl-CoA:3-ketoacid coenzyme A transferase 2A, mitochondrial (520 aa).

The N-terminal 39 residues, 1–39 (MAALRLLAWAFSRRVSAHRPQPTLPHHLIRHYPTTRCGK), are a transit peptide targeting the mitochondrion. The disordered stretch occupies residues 280 to 299 (ERLTTRDSPPAPGSKDQDPK). The active-site 5-glutamyl coenzyme A thioester intermediate is the E342.

It belongs to the 3-oxoacid CoA-transferase family. As to quaternary structure, homodimer. As to expression, expressed in flagella of epididymal sperm.

It is found in the mitochondrion. It carries out the reaction a 3-oxo acid + succinyl-CoA = a 3-oxoacyl-CoA + succinate. Its pathway is ketone metabolism; succinyl-CoA degradation; acetoacetyl-CoA from succinyl-CoA: step 1/1. Key enzyme for ketone body catabolism. Transfers the CoA moiety from succinate to acetoacetate. Formation of the enzyme-CoA intermediate proceeds via an unstable anhydride species formed between the carboxylate groups of the enzyme and substrate. Probably play and important roles in the energy metabolism of spermatozoa. The protein is Succinyl-CoA:3-ketoacid coenzyme A transferase 2A, mitochondrial (Oxct2a) of Rattus norvegicus (Rat).